The sequence spans 431 residues: Histidinol dehydrogenase (431 aa).

Residues Tyr130, Gln191, and Asn214 each coordinate NAD(+). Substrate contacts are provided by Ser237, Gln259, and His262. Residues Gln259 and His262 each contribute to the Zn(2+) site. Residues Glu327 and His328 each act as proton acceptor in the active site. Substrate is bound by residues His328, Asp361, Glu415, and His420. Position 361 (Asp361) interacts with Zn(2+). Residue His420 coordinates Zn(2+).

It belongs to the histidinol dehydrogenase family. Requires Zn(2+) as cofactor.

It carries out the reaction L-histidinol + 2 NAD(+) + H2O = L-histidine + 2 NADH + 3 H(+). It functions in the pathway amino-acid biosynthesis; L-histidine biosynthesis; L-histidine from 5-phospho-alpha-D-ribose 1-diphosphate: step 9/9. Catalyzes the sequential NAD-dependent oxidations of L-histidinol to L-histidinaldehyde and then to L-histidine. The polypeptide is Histidinol dehydrogenase (Rhodopseudomonas palustris (strain ATCC BAA-98 / CGA009)).